The sequence spans 189 residues: Interferon alpha-14 (189 aa).

The first 23 residues, 1–23 (MALPFALMMALVVLSCKSSCSLG), serve as a signal peptide directing secretion. 2 disulfides stabilise this stretch: cysteine 24-cysteine 122 and cysteine 52-cysteine 162. N-linked (GlcNAc...) asparagine glycosylation occurs at asparagine 95.

Belongs to the alpha/beta interferon family.

It localises to the secreted. Produced by macrophages, IFN-alpha have antiviral activities. Interferon stimulates the production of two enzymes: a protein kinase and an oligoadenylate synthetase. This is Interferon alpha-14 (IFNA14) from Homo sapiens (Human).